The chain runs to 239 residues: uncharacterized protein (239 aa).

This sequence belongs to the initiator RepB protein family.

In terms of biological role, mutations in ORF 239 affects the incN plasmid pUC1 E.coli polA-independence but not its autonomous replication ability. This is an uncharacterized protein from Escherichia coli.